We begin with the raw amino-acid sequence, 203 residues long: Ribosome-binding factor A (203 aa).

Residues 119–141 (LAEVRRDARPAGDEDPYRRPRTV) show a composition bias toward basic and acidic residues. The interval 119–203 (LAEVRRDARP…SPGGDPTAGR (85 aa)) is disordered. A compositionally biased stretch (acidic residues) spans 142-169 (DEDDEDEDEDLVDEFDEFDRVEELDADA).

The protein belongs to the RbfA family. In terms of assembly, monomer. Binds 30S ribosomal subunits, but not 50S ribosomal subunits or 70S ribosomes.

It localises to the cytoplasm. Its function is as follows. One of several proteins that assist in the late maturation steps of the functional core of the 30S ribosomal subunit. Associates with free 30S ribosomal subunits (but not with 30S subunits that are part of 70S ribosomes or polysomes). Required for efficient processing of 16S rRNA. May interact with the 5'-terminal helix region of 16S rRNA. This chain is Ribosome-binding factor A, found in Frankia alni (strain DSM 45986 / CECT 9034 / ACN14a).